Here is a 357-residue protein sequence, read N- to C-terminus: MGIYLSTPKTDKFSEDGENHKLRYGLSSMQGWRASMEDAHAAILDLDDNTSFLGVYDGHGGKVVSKFCAKYLHQQVLSDEAYAAGDVGTSLQKAFFRMDEMMQGQRGWRELAVLGDKINKFSGMIEGLIWSPRSGDSANKPDAWAFEEGPHSDFAGPNSGSTACVAVVRDKQLFVANAGDSRCVISRKNQAYNLSRDHKPDLEAEKERILKAGGFIHAGRVNGSLNLSRAIGDMEFKQNKFLPSEKQIVTASPDVNTVELCDDDDFLVLACDGIWDCMTSQQLVDFIHEQLNSETKLSVVCEKVLDRCLAPNTSGGEGCDNMTMILVRFKNPTPSETELKPEASQAEGNHDEPSSSN.

The PPM-type phosphatase domain occupies 23-329 (RYGLSSMQGW…DNMTMILVRF (307 aa)). Residues Asp-57, Gly-58, Asp-272, and Asp-320 each contribute to the Mn(2+) site. The disordered stretch occupies residues 331 to 357 (NPTPSETELKPEASQAEGNHDEPSSSN). The span at 348-357 (GNHDEPSSSN) shows a compositional bias: basic and acidic residues.

It belongs to the PP2C family. Requires Mg(2+) as cofactor. Mn(2+) is required as a cofactor.

It catalyses the reaction O-phospho-L-seryl-[protein] + H2O = L-seryl-[protein] + phosphate. The catalysed reaction is O-phospho-L-threonyl-[protein] + H2O = L-threonyl-[protein] + phosphate. The polypeptide is Probable protein phosphatase 2C 60 (Arabidopsis thaliana (Mouse-ear cress)).